We begin with the raw amino-acid sequence, 486 residues long: Protein nucleotidyltransferase YdiU (486 aa).

The ATP site is built by G90, G92, R93, K113, D125, G126, R176, and R183. Catalysis depends on D252, which acts as the Proton acceptor. Positions 253 and 262 each coordinate Mg(2+). D262 contacts ATP.

Belongs to the SELO family. Requires Mg(2+) as cofactor. Mn(2+) serves as cofactor.

The catalysed reaction is L-seryl-[protein] + ATP = 3-O-(5'-adenylyl)-L-seryl-[protein] + diphosphate. It catalyses the reaction L-threonyl-[protein] + ATP = 3-O-(5'-adenylyl)-L-threonyl-[protein] + diphosphate. The enzyme catalyses L-tyrosyl-[protein] + ATP = O-(5'-adenylyl)-L-tyrosyl-[protein] + diphosphate. It carries out the reaction L-histidyl-[protein] + UTP = N(tele)-(5'-uridylyl)-L-histidyl-[protein] + diphosphate. The catalysed reaction is L-seryl-[protein] + UTP = O-(5'-uridylyl)-L-seryl-[protein] + diphosphate. It catalyses the reaction L-tyrosyl-[protein] + UTP = O-(5'-uridylyl)-L-tyrosyl-[protein] + diphosphate. In terms of biological role, nucleotidyltransferase involved in the post-translational modification of proteins. It can catalyze the addition of adenosine monophosphate (AMP) or uridine monophosphate (UMP) to a protein, resulting in modifications known as AMPylation and UMPylation. In Stutzerimonas stutzeri (strain A1501) (Pseudomonas stutzeri), this protein is Protein nucleotidyltransferase YdiU.